Here is a 113-residue protein sequence, read N- to C-terminus: uncharacterized protein (113 aa).

A CHY-type; degenerate zinc finger spans residues Leu16–His96. Cys23, His25, Cys46, Cys49, Cys73, Cys76, Cys91, and Cys94 together coordinate Zn(2+).

The protein resides in the cytoplasm. It is found in the nucleus. This is an uncharacterized protein from Schizosaccharomyces pombe (strain 972 / ATCC 24843) (Fission yeast).